The following is a 296-amino-acid chain: Probable endonuclease 4 (296 aa).

The Zn(2+) site is built by H68, H109, E144, D178, H181, H213, D226, H228, and E258.

It belongs to the AP endonuclease 2 family. It depends on Zn(2+) as a cofactor.

The enzyme catalyses Endonucleolytic cleavage to 5'-phosphooligonucleotide end-products.. In terms of biological role, endonuclease IV plays a role in DNA repair. It cleaves phosphodiester bonds at apurinic or apyrimidinic (AP) sites, generating a 3'-hydroxyl group and a 5'-terminal sugar phosphate. This is Probable endonuclease 4 from Staphylococcus saprophyticus subsp. saprophyticus (strain ATCC 15305 / DSM 20229 / NCIMB 8711 / NCTC 7292 / S-41).